The following is a 1115-amino-acid chain: Calcium-transporting ATPase PAT1 (1115 aa).

Over 1–99 (MTGSHEMESI…SIVLDALSDH (99 aa)) the chain is Stromal. Residues 100 to 120 (ILILLIVAAVVSIVLGSIDYT) form a helical membrane-spanning segment. Residues 121–126 (SDHPET) lie on the Lumenal side of the membrane. The chain crosses the membrane as a helical span at residues 127–147 (GWIDGVAILVAVILVVGITSL). The Stromal segment spans residues 148–235 (NDFKNQARFR…KGQPQDNMDP (88 aa)). Residues 236–256 (FLISGSMVIEGFGTMLVTAVG) traverse the membrane as a helical segment. Residues 257-287 (VNSFNGKTMMGLRVASEDTPLQMKLSVLASR) lie on the Lumenal side of the membrane. The chain crosses the membrane as a helical span at residues 288 to 308 (IGYFGMGAAILMLLIAIPKYF). Topologically, residues 309–328 (IQRKVHDIEITREDAQPIVQ) are stromal. The helical transmembrane segment at 329–349 (LVISAITIVVVAVPEGLPLAV) threads the bilayer. Residues 350–735 (TMALAYGMMK…GRNIYDAICK (386 aa)) lie on the Lumenal side of the membrane. Residue Asp-385 is the 4-aspartylphosphate intermediate of the active site. Mg(2+) is bound by residues Asp-678 and Asp-682. A helical membrane pass occupies residues 736–756 (FLQFQLTVNVVAVTVAFIGTL). The Stromal segment spans residues 757-832 (TSDVVEDKDN…GKNAPLITRS (76 aa)). The tract at residues 762 to 784 (EDKDNSSSSGSADKVTEEEPRQG) is disordered. Residues 833-853 (MWKNIIGQAALQLAILFTILY) form a helical membrane-spanning segment. Residues 854–873 (QGHNIFQHFVPQAHGPIIKN) are Lumenal-facing. Residues 874-894 (GLHHYTLVFNCFVFLQLFNEI) traverse the membrane as a helical segment. Residues 895–913 (NARVLGSRTNPFKNFFNNP) are Stromal-facing. Residues 914–934 (IFIAVMIFTLGVQIIFVTFGG) traverse the membrane as a helical segment. Topologically, residues 935 to 943 (SATSTDSLY) are lumenal. The chain crosses the membrane as a helical span at residues 944–964 (IVEWICCVVVGAISLPVGLLL). At 965–1115 (RKIPIREPVV…LHLPVNQINN (151 aa)) the chain is on the stromal side. A disordered region spans residues 984-1056 (AVYTSPSPNP…IPSSSSNLVN (73 aa)). Residues 1040–1053 (NDNINTPIPSSSSN) show a composition bias toward low complexity.

The protein belongs to the cation transport ATPase (P-type) (TC 3.A.3) family. Type IIB subfamily.

Its subcellular location is the contractile vacuole membrane. The protein localises to the cell membrane. The catalysed reaction is Ca(2+)(in) + ATP + H2O = Ca(2+)(out) + ADP + phosphate + H(+). Calcium ATPase involved in Ca(2+) homeostasis as a component of the contractile vacuole complex. This chain is Calcium-transporting ATPase PAT1 (patA), found in Dictyostelium discoideum (Social amoeba).